Reading from the N-terminus, the 195-residue chain is Ras-related protein Rab-31 (195 aa).

Residues Gly-16, Gly-18, Lys-19, Ser-20, Ser-21, Asp-32, and His-33 each contribute to the GTP site. Ser-20 serves as a coordination point for Mg(2+). 2 short sequence motifs (switch) span residues 30–42 (HFDH…IGAS) and 63–79 (AGQE…YRGS). Position 36 is a phosphoserine (Ser-36). The GTP site is built by Thr-38, Gly-64, Asn-119, Asp-122, Ala-150, and Lys-151. Thr-38 lines the Mg(2+) pocket. S-geranylgeranyl cysteine attachment occurs at residues Cys-194 and Cys-195.

Belongs to the small GTPase superfamily. Rab family. In terms of assembly, interacts with OCRL. Interacts with NGFR. Interacts (in GDP-bound form) with RIN3 and GAPVD1, which function as guanine exchange factors (GEF). Interacts (in GTP-bound form) with EEA1. Interacts with EGFR. Interacts (in GTP-bound form) with APPL2; interaction contributes to or enhances recruitment of APPL2 to the phagosomes; interaction enhances Fc-gamma receptor-mediated phagocytosis through PI3K/Akt signaling in macrophages. The cofactor is Mg(2+). Highest expression in placenta and brain with lower levels in heart and lung. Not detected in liver, skeletal muscle, kidney or pancreas.

The protein resides in the golgi apparatus. Its subcellular location is the trans-Golgi network. The protein localises to the trans-Golgi network membrane. It localises to the early endosome. It is found in the cytoplasmic vesicle. The protein resides in the phagosome. Its subcellular location is the phagosome membrane. It carries out the reaction GTP + H2O = GDP + phosphate + H(+). Its activity is regulated as follows. Regulated by guanine nucleotide exchange factors (GEFs) including RIN3 and GAPVD1 which promote the exchange of bound GDP for free GTP. Regulated by GTPase activating proteins (GAPs) which increase the GTP hydrolysis activity. Inhibited by GDP dissociation inhibitors (GDIs) which prevent Rab-GDP dissociation. Functionally, the small GTPases Rab are key regulators of intracellular membrane trafficking, from the formation of transport vesicles to their fusion with membranes. Rabs cycle between an inactive GDP-bound form and an active GTP-bound form that is able to recruit to membranes different set of downstream effectors directly responsible for vesicle formation, movement, tethering and fusion. Required for the integrity and for normal function of the Golgi apparatus and the trans-Golgi network. Plays a role in insulin-stimulated translocation of GLUT4 to the cell membrane. Plays a role in M6PR transport from the trans-Golgi network to endosomes. Plays a role in the internalization of EGFR from the cell membrane into endosomes. Plays a role in the maturation of phagosomes that engulf pathogens, such as S.aureus and M.tuberculosis. The protein is Ras-related protein Rab-31 of Homo sapiens (Human).